A 473-amino-acid polypeptide reads, in one-letter code: LEC14B protein (473 aa).

WD repeat units lie at residues 212 to 242, 254 to 285, 301 to 331, 377 to 413, and 425 to 455; these read GYSF…CVYD, AHES…KVWD, GHLE…KLWD, GHSV…YIYD, and YHKA…VKWE.

This sequence belongs to the WD repeat LEC14B family.

The chain is LEC14B protein from Lithospermum erythrorhizon (Purple gromwell).